The sequence spans 156 residues: Small ribosomal subunit protein uS7 (156 aa).

It belongs to the universal ribosomal protein uS7 family. In terms of assembly, part of the 30S ribosomal subunit. Contacts proteins S9 and S11.

In terms of biological role, one of the primary rRNA binding proteins, it binds directly to 16S rRNA where it nucleates assembly of the head domain of the 30S subunit. Is located at the subunit interface close to the decoding center, probably blocks exit of the E-site tRNA. This chain is Small ribosomal subunit protein uS7, found in Bacillus pumilus (strain SAFR-032).